A 261-amino-acid polypeptide reads, in one-letter code: Small ribosomal subunit protein uS2 (261 aa).

Residue serine 2 is modified to N-acetylserine. Residues 211–261 form a disordered region; it reads EQNAAEDSKAEDAEEAPVADAEPDWSGETEDVDWAESGATPAAEEAAASNW. The segment covering 222–244 has biased composition (acidic residues); that stretch reads DAEEAPVADAEPDWSGETEDVDW. Over residues 245–261 the composition is skewed to low complexity; the sequence is AESGATPAAEEAAASNW.

This sequence belongs to the universal ribosomal protein uS2 family. In terms of assembly, component of the small ribosomal subunit. Mature ribosomes consist of a small (40S) and a large (60S) subunit. The 40S subunit contains about 33 different proteins and 1 molecule of RNA (18S). The 60S subunit contains about 49 different proteins and 3 molecules of RNA (25S, 5.8S and 5S). Interacts with RPS21.

The protein resides in the cytoplasm. Required for the assembly and/or stability of the 40S ribosomal subunit. Required for the processing of the 20S rRNA-precursor to mature 18S rRNA in a late step of the maturation of 40S ribosomal subunits. The sequence is that of Small ribosomal subunit protein uS2 from Meyerozyma guilliermondii (strain ATCC 6260 / CBS 566 / DSM 6381 / JCM 1539 / NBRC 10279 / NRRL Y-324) (Yeast).